The chain runs to 20 residues: Agglutinin beta-4 chain (20 aa).

It belongs to the jacalin lectin family. As to quaternary structure, tetramer of four alpha chains associated with two or four beta chains.

Its function is as follows. D-galactose-specific lectin, binds the T-antigen structure Gal-beta1,3-GalNAc (Thomsen-Friedenreich-antigen-specific lectin). Potent and selective stimulant of distinct T- and B-cell functions. Shows a unique ability to specifically recognize IgA-1 from human serum. This chain is Agglutinin beta-4 chain, found in Artocarpus integer (Jack fruit).